A 257-amino-acid chain; its full sequence is Fimbrial assembly protein, serogroup I (257 aa).

This Dichelobacter nodosus (Bacteroides nodosus) protein is Fimbrial assembly protein, serogroup I (fimB).